We begin with the raw amino-acid sequence, 618 residues long: D-glucuronyl C5-epimerase (618 aa).

Over 1-11 the chain is Cytoplasmic; sequence MRCLAARVNYK. A helical; Signal-anchor for type II membrane protein membrane pass occupies residues 12-29; it reads TLIIICALFTLVTVLLWN. The Lumenal segment spans residues 30–618; sequence KCSSDKAIQF…YLKGSRAKHN (589 aa). Substrate is bound by residues Tyr-180, 185 to 187, Gln-202, Tyr-210, Gln-213, and Gln-216; that span reads RDR. Thr-238, Glu-240, Thr-269, Asn-270, and Asp-393 together coordinate Ca(2+). Residues 430–433, 500–501, Asn-511, Tyr-515, Tyr-561, Arg-564, and 573–582 contribute to the substrate site; these read KLGE, EY, and NLARWDYHTT.

Belongs to the D-glucuronyl C5-epimerase family. In terms of assembly, homodimer. Interacts with HS2ST1. In terms of tissue distribution, widely expressed with highest levels in lung and lowest levels in spleen.

The protein resides in the golgi apparatus membrane. It catalyses the reaction [heparosan-N-sulfate](n) = [heparan-N-sulfate](n). Its pathway is glycan metabolism; heparan sulfate biosynthesis. The protein operates within glycan metabolism; heparin biosynthesis. Functionally, converts D-glucuronic acid residues adjacent to N-sulfate sugar residues to L-iduronic acid residues, both in maturing heparan sulfate (HS) and heparin chains. This is important for further modifications that determine the specificity of interactions between these glycosaminoglycans and proteins. This is D-glucuronyl C5-epimerase (Glce) from Mus musculus (Mouse).